We begin with the raw amino-acid sequence, 348 residues long: MGYELFGLPMIYYISMVAKVLVVFVFVLLTVAYATYAERKIIGHMQVRLGPMRTGWHGLLQPIADGLKLFFKEEIVPSQADKFAFLIAPIIALVPAFIGFAVIPFGETIEVAGYKIPLQIAGYYDTVSGQVVDMNVGVLYILALASIGVYGIVLAGWSSNSKYSLLGGLRSSAQMISYELAAGLAIISVFMLSESLSLQKIVADQANGAWYCFKQPLAFILFFICSLAEINRTPFDLPEAETELVSGFCTEYSSMKYAMFFMAEYANMVTVCAVTTTLFLGGWHGPAFLPGWAWFIAKVYFLIFVCMWIRATYPRYRYDQLMRLGWKVFLPLTLVNIIVTGIVVSLQS.

Helical transmembrane passes span 11 to 31 (IYYI…LLTV), 83 to 103 (FAFL…FAVI), 136 to 156 (VGVL…VLAG), 172 to 192 (SAQM…VFML), 208 to 228 (GAWY…CSLA), 268 to 288 (MVTV…GPAF), 289 to 309 (LPGW…CMWI), and 324 to 344 (LGWK…GIVV).

Belongs to the complex I subunit 1 family. NDH-1 is composed of 14 different subunits. Subunits NuoA, H, J, K, L, M, N constitute the membrane sector of the complex.

It localises to the cell inner membrane. The catalysed reaction is a quinone + NADH + 5 H(+)(in) = a quinol + NAD(+) + 4 H(+)(out). Functionally, NDH-1 shuttles electrons from NADH, via FMN and iron-sulfur (Fe-S) centers, to quinones in the respiratory chain. The immediate electron acceptor for the enzyme in this species is believed to be ubiquinone. Couples the redox reaction to proton translocation (for every two electrons transferred, four hydrogen ions are translocated across the cytoplasmic membrane), and thus conserves the redox energy in a proton gradient. This subunit may bind ubiquinone. The chain is NADH-quinone oxidoreductase subunit H 1 from Geobacter sulfurreducens (strain ATCC 51573 / DSM 12127 / PCA).